Reading from the N-terminus, the 457-residue chain is Solute carrier family 38 member 6 (457 aa).

Methionine 1 bears the N-acetylmethionine mark. Phosphoserine occurs at positions 4 and 7. A run of 5 helical transmembrane segments spans residues 48–68 (FGLSVFNVMNAIMGSGILGLA), 70–90 (VMANTGILGFSFLLLFVALLA), 112–132 (LGLFAFGLPGKVVVAGTIIIQ), 171–191 (LLIIICVGIVFPLSLLPKIGF), and 192–212 (LGYTSSLSFFFMVFFALVVVI). Residues cysteine 219 and cysteine 239 are joined by a disulfide bond. 6 helical membrane-spanning segments follow: residues 251-271 (VYAIPTMAFSFLCHTSVLPIY), 289-309 (AIALSFLVYFVSALFGYLTFY), 328-348 (VIVMAVKLCILFAVLLTAPLI), 372-392 (SLTTAALNAIIVVLAIYVPDI), 395-415 (VFGVVGASTSTCLIFVFPGLF), and 432-452 (ALFLLLTGAVVGSFSLVLIIF).

It belongs to the amino acid/polyamine transporter 2 family. As to expression, expressed exclusively in neurons and not in astrocytes and glia cells. Highly expressed in the synapse. Highly expressed in glutamatergic neurons. Primarily expressed in excitatory neurons, with some minor expression in inhibitory neurons.

The protein localises to the cell membrane. Its subcellular location is the synapse. The catalysed reaction is L-glutamine(out) = L-glutamine(in). The enzyme catalyses L-glutamate(out) = L-glutamate(in). Functionally, amino acid transporter with an apparent selectivity for L-glutamine and L-glutamate. May facilitate glutamine uptake in excitatory neurons. The transport mechanism remains to be elucidated. This chain is Solute carrier family 38 member 6, found in Mus musculus (Mouse).